Reading from the N-terminus, the 386-residue chain is Protein DOM34 (386 aa).

This sequence belongs to the eukaryotic release factor 1 family. Pelota subfamily. Monomer. Component of the Dom34-Hbs1 complex, also named Pelota-HBS1L complex, composed of DOM34 and HBS1. A divalent metal cation is required as a cofactor.

The protein localises to the cytoplasm. In terms of biological role, component of the Dom34-Hbs1 complex, a complex that recognizes stalled ribosomes and triggers the No-Go Decay (NGD) pathway. In the Dom34-Hbs1 complex, DOM34 recognizes ribosomes stalled at the 3' end of an mRNA and engages stalled ribosomes by destabilizing mRNA in the mRNA channel. Following ribosome-binding, the Dom34-Hbs1 complex promotes the disassembly of stalled ribosomes, followed by degradation of damaged mRNAs as part of the NGD pathway. The Dom34-Hbs1 complex is also involved in non-functional rRNA decay. This Saccharomyces cerevisiae (strain ATCC 204508 / S288c) (Baker's yeast) protein is Protein DOM34.